A 257-amino-acid polypeptide reads, in one-letter code: Homeobox protein goosecoid (257 aa).

A DNA-binding region (homeobox) is located at residues 160–219 (KRRHRTIFTDEQLEALENLFQETKYPDVGTREQLARKVHLREEKVEVWFKNRRAKWRRQK). The segment at 213–257 (AKWRRQKRSSSEESENAEKWNKTSSSKASPEKREEEGKSDLDSDS) is disordered. Positions 241–257 (SPEKREEEGKSDLDSDS) are enriched in basic and acidic residues.

The protein belongs to the paired homeobox family. Bicoid subfamily.

The protein localises to the nucleus. Its function is as follows. Regulates chordin (CHRD). May play a role in spatial programing within discrete embryonic fields or lineage compartments during organogenesis. In concert with NKX3-2, plays a role in defining the structural components of the middle ear; required for the development of the entire tympanic ring. Probably involved in the regulatory networks that define neural crest cell fate specification and determine mesoderm cell lineages in mammals. In Pongo pygmaeus (Bornean orangutan), this protein is Homeobox protein goosecoid (GSC).